The chain runs to 177 residues: MNKLILLPREFFARDTNLVSTELIGKVLYFQGKTAIITETESYIGQDDPACHAARGRTKRTDIMFGPAGFSYVYLIYGMYYCLNFVTETEGFPAATLIRGVHVISPENLYLNGPGKLCKYLGINISHNKCDLINNNEFFVSDIGLKLPYSTTTRIGITKGTDKLWRYVVTDIIRLPA.

Belongs to the DNA glycosylase MPG family.

The protein is Putative 3-methyladenine DNA glycosylase of Rickettsia felis (strain ATCC VR-1525 / URRWXCal2) (Rickettsia azadi).